A 265-amino-acid polypeptide reads, in one-letter code: uncharacterized protein (265 aa).

H7, H9, E94, H130, H155, and D205 together coordinate a divalent metal cation.

This sequence belongs to the metallo-dependent hydrolases superfamily. TatD-type hydrolase family. Requires a divalent metal cation as cofactor.

This is an uncharacterized protein from Escherichia coli O157:H7.